A 360-amino-acid polypeptide reads, in one-letter code: COP9 signalosome complex subunit 5 (360 aa).

One can recognise an MPN domain in the interval 60–197 (AKISALALLK…IGAFRTYPKD (138 aa)). Residues His-143, His-145, and Asp-156 each coordinate Zn(2+). The short motif at 143-156 (HSHPGYGCWLSGID) is the JAMM motif element. Disordered regions lie at residues 293-315 (LMPS…RDSS) and 341-360 (SNKA…MVEA). Polar residues predominate over residues 341 to 350 (SNKASTSAPD).

This sequence belongs to the peptidase M67A family. CSN5 subfamily. Component of the CSN complex, probably composed of CSN1, CSN2, CSN3, CSN4, CSN5, CSN6, CSN7 and CSN8. Interacts with MCM2.

Probable protease subunit of the COP9 signalosome complex (CSN), a complex involved in various cellular and developmental processes such as photomorphogenesis and response to hormones. The CSN complex is an essential regulator of the ubiquitin (Ubl) conjugation pathway by mediating the deneddylation of the cullin subunits of SCF-type E3 ligase complexes, leading to decrease the Ubl ligase activity of SCF. Involved in early response to iron deficiency. The polypeptide is COP9 signalosome complex subunit 5 (Oryza sativa subsp. japonica (Rice)).